We begin with the raw amino-acid sequence, 691 residues long: Elongation factor G (691 aa).

A tr-type G domain is found at 8–282 (ERVRNIGIAA…AVVDYLPAPV (275 aa)). GTP contacts are provided by residues 17 to 24 (AHIDAGKT), 81 to 85 (DTPGH), and 135 to 138 (NKMD).

This sequence belongs to the TRAFAC class translation factor GTPase superfamily. Classic translation factor GTPase family. EF-G/EF-2 subfamily.

It localises to the cytoplasm. Catalyzes the GTP-dependent ribosomal translocation step during translation elongation. During this step, the ribosome changes from the pre-translocational (PRE) to the post-translocational (POST) state as the newly formed A-site-bound peptidyl-tRNA and P-site-bound deacylated tRNA move to the P and E sites, respectively. Catalyzes the coordinated movement of the two tRNA molecules, the mRNA and conformational changes in the ribosome. In Prochlorococcus marinus (strain MIT 9515), this protein is Elongation factor G.